The following is a 423-amino-acid chain: Tyrosine--tRNA ligase (423 aa).

L-tyrosine is bound at residue Tyr35. Positions 40-49 match the 'HIGH' region motif; it reads PTAPSLHAGH. Tyr170 and Gln174 together coordinate L-tyrosine. A 'KMSKS' region motif is present at residues 230 to 234; sequence KFGKS. Lys233 provides a ligand contact to ATP. The S4 RNA-binding domain maps to 355–412; that stretch reads DLITDLLVATGLSASKGAARRTIAEGGVSVNNVKIDSDEWTPQASDFLHGRWLVLRRG.

This sequence belongs to the class-I aminoacyl-tRNA synthetase family. TyrS type 1 subfamily. In terms of assembly, homodimer.

The protein resides in the cytoplasm. The catalysed reaction is tRNA(Tyr) + L-tyrosine + ATP = L-tyrosyl-tRNA(Tyr) + AMP + diphosphate + H(+). Its function is as follows. Catalyzes the attachment of tyrosine to tRNA(Tyr) in a two-step reaction: tyrosine is first activated by ATP to form Tyr-AMP and then transferred to the acceptor end of tRNA(Tyr). The sequence is that of Tyrosine--tRNA ligase from Mycobacterium sp. (strain JLS).